The sequence spans 444 residues: Tol-Pal system protein TolB (444 aa).

Residues 1 to 19 (MRNIIYFILSLLFSVTSYA) form the signal peptide.

The protein belongs to the TolB family. In terms of assembly, the Tol-Pal system is composed of five core proteins: the inner membrane proteins TolA, TolQ and TolR, the periplasmic protein TolB and the outer membrane protein Pal. They form a network linking the inner and outer membranes and the peptidoglycan layer.

The protein resides in the periplasm. Functionally, part of the Tol-Pal system, which plays a role in outer membrane invagination during cell division and is important for maintaining outer membrane integrity. The polypeptide is Tol-Pal system protein TolB (Rickettsia rickettsii (strain Iowa)).